We begin with the raw amino-acid sequence, 210 residues long: Glycerol-3-phosphate acyltransferase (210 aa).

The next 5 membrane-spanning stretches (helical) occupy residues 1–21 (MLLS…FPAG), 53–73 (GPAL…VVAA), 87–107 (IAWL…LPVW), 122–142 (VLLA…LLLL), and 147–167 (IVSL…LILP).

Belongs to the PlsY family. In terms of assembly, probably interacts with PlsX.

Its subcellular location is the cell inner membrane. It catalyses the reaction an acyl phosphate + sn-glycerol 3-phosphate = a 1-acyl-sn-glycero-3-phosphate + phosphate. Its pathway is lipid metabolism; phospholipid metabolism. Catalyzes the transfer of an acyl group from acyl-phosphate (acyl-PO(4)) to glycerol-3-phosphate (G3P) to form lysophosphatidic acid (LPA). This enzyme utilizes acyl-phosphate as fatty acyl donor, but not acyl-CoA or acyl-ACP. The protein is Glycerol-3-phosphate acyltransferase of Synechococcus elongatus (strain ATCC 33912 / PCC 7942 / FACHB-805) (Anacystis nidulans R2).